The primary structure comprises 340 residues: Phospho-N-acetylmuramoyl-pentapeptide-transferase (340 aa).

Helical transmembrane passes span M3 to I23, G53 to F73, A79 to L99, M119 to T139, I144 to V164, I176 to F196, E200 to F220, V227 to A247, V250 to L270, and V315 to L335.

It belongs to the glycosyltransferase 4 family. MraY subfamily. Mg(2+) serves as cofactor.

It localises to the cell membrane. It catalyses the reaction UDP-N-acetyl-alpha-D-muramoyl-L-alanyl-gamma-D-glutamyl-L-lysyl-D-alanyl-D-alanine + di-trans,octa-cis-undecaprenyl phosphate = Mur2Ac(oyl-L-Ala-gamma-D-Glu-L-Lys-D-Ala-D-Ala)-di-trans,octa-cis-undecaprenyl diphosphate + UMP. The protein operates within cell wall biogenesis; peptidoglycan biosynthesis. In terms of biological role, catalyzes the initial step of the lipid cycle reactions in the biosynthesis of the cell wall peptidoglycan: transfers peptidoglycan precursor phospho-MurNAc-pentapeptide from UDP-MurNAc-pentapeptide onto the lipid carrier undecaprenyl phosphate, yielding undecaprenyl-pyrophosphoryl-MurNAc-pentapeptide, known as lipid I. This chain is Phospho-N-acetylmuramoyl-pentapeptide-transferase, found in Streptococcus thermophilus (strain ATCC BAA-250 / LMG 18311).